Here is a 198-residue protein sequence, read N- to C-terminus: Nucleoid occlusion factor SlmA (198 aa).

One can recognise an HTH tetR-type domain in the interval 10–70 (NRREEILQSL…SLIEFIEDSL (61 aa)). The H-T-H motif DNA-binding region spans 33–52 (TTAKLAASVGVSEAALYRHF). Residues 117 to 145 (EQDKLQGRINQLFERIEAQLRQVLREKKM) adopt a coiled-coil conformation.

It belongs to the nucleoid occlusion factor SlmA family. In terms of assembly, homodimer. Interacts with FtsZ.

The protein localises to the cytoplasm. The protein resides in the nucleoid. Required for nucleoid occlusion (NO) phenomenon, which prevents Z-ring formation and cell division over the nucleoid. Acts as a DNA-associated cell division inhibitor that binds simultaneously chromosomal DNA and FtsZ, and disrupts the assembly of FtsZ polymers. SlmA-DNA-binding sequences (SBS) are dispersed on non-Ter regions of the chromosome, preventing FtsZ polymerization at these regions. The chain is Nucleoid occlusion factor SlmA from Enterobacter sp. (strain 638).